The sequence spans 165 residues: Protein SprT (165 aa).

The region spanning 20-162 is the SprT-like domain; sequence EKLAQANLKL…YRCVHCGEQL (143 aa). His78 serves as a coordination point for Zn(2+). The active site involves Glu79. His82 lines the Zn(2+) pocket.

This sequence belongs to the SprT family. Requires Zn(2+) as cofactor.

Its subcellular location is the cytoplasm. The polypeptide is Protein SprT (Escherichia coli (strain SMS-3-5 / SECEC)).